Consider the following 299-residue polypeptide: MGHTLRPGTPLPRCLHLKLCLLLALAGLHFSSGISQVTKSVKEMAALSCDYNISIDELARMRIYWQKDQQMVLSIISGQVEVWPEYKNRTFPDIINNLSLMILALRLSDKGTYTCVVQKNENGSFRREHLTSVTLSIRADFPVPSITDIGHPDPNVKRIRCSASGGFPEPRLAWMEDGEELNAVNTTVDQDLDTELYSVSSELDFNVTNNHSIVCLIKYGELSVSQIFPWSKPKQEPPIDQLPFWVIIPVSGALVLTAVVLYCLACRHVARWKRTRRNEETVGTERLSPIYLGSAQSSG.

Residues 1-32 (MGHTLRPGTPLPRCLHLKLCLLLALAGLHFSS) form the signal peptide. The Ig-like V-type domain occupies 33-131 (GISQVTKSVK…NGSFRREHLT (99 aa)). Residues 33-243 (GISQVTKSVK…KQEPPIDQLP (211 aa)) are Extracellular-facing. Residues Cys-49 and Cys-115 are joined by a disulfide bond. N-linked (GlcNAc...) asparagine glycans are attached at residues Asn-52, Asn-88, Asn-97, Asn-122, Asn-185, Asn-206, and Asn-210. One can recognise an Ig-like C2-type domain in the interval 144–225 (PSITDIGHPD…LIKYGELSVS (82 aa)). A disulfide bridge connects residues Cys-161 and Cys-215. Residues 244–264 (FWVIIPVSGALVLTAVVLYCL) form a helical membrane-spanning segment. Residues 265 to 299 (ACRHVARWKRTRRNEETVGTERLSPIYLGSAQSSG) are Cytoplasmic-facing.

As to quaternary structure, homodimer. Interacts with CTLA4; this interaction inhibits T-cell activation. Interacts with PDL1/CD274; this interaction blocks PDL1/PDCD1 binding and thus PDL1/CD274 inhibitory function. Interacts with CD28.

It is found in the cell membrane. Costimulatory molecule that belongs to the immunoglobulin superfamily that plays an important role in T-lymphocyte activation. Acts as the primary auxiliary signal augmenting the MHC/TCR signal in naive T-cells together with the CD28 receptor which is constitutively expressed on the cell surface of T-cells. In turn, activates different signaling pathways such as NF-kappa-B or MAPK leading to the production of different cytokines. In addition, CD28/CD80 costimulatory signal stimulates glucose metabolism and ATP synthesis of T-cells by activating the PI3K/Akt signaling pathway. Also acts as a regulator of PDL1/PDCD1 interactions to limit excess engagement of PDL1 and its inhibitory role in immune responses. Expressed on B-cells, plays a critical role in regulating interactions between B-cells and T-cells in both early and late germinal center responses, which are crucial for the generation of effective humoral immune responses. This Oryctolagus cuniculus (Rabbit) protein is T-lymphocyte activation antigen CD80 (CD80).